Here is a 215-residue protein sequence, read N- to C-terminus: Protein transport protein sec22 (215 aa).

Topologically, residues methionine 1–glutamine 194 are cytoplasmic. Residues arginine 9 to methionine 118 enclose the Longin domain. Positions asparagine 133–arginine 193 constitute a v-SNARE coiled-coil homology domain. A helical; Anchor for type IV membrane protein membrane pass occupies residues tyrosine 195–alanine 215.

This sequence belongs to the synaptobrevin family. In terms of assembly, component of two distinct SNARE complexes consisting of sed5, bos1, bet1 and sec22 or ufe1, use1, sec20 and sec22. Ykt6 can probably replace sec22 as subunit of either complex.

The protein localises to the membrane. Its subcellular location is the endoplasmic reticulum membrane. The protein resides in the golgi apparatus membrane. Its function is as follows. Nonessential SNARE involved in targeting and fusion of ER-derived transport vesicles with the Golgi complex as well as Golgi-derived retrograde transport vesicles with the ER. This is Protein transport protein sec22 (sec22) from Schizosaccharomyces pombe (strain 972 / ATCC 24843) (Fission yeast).